The following is a 138-amino-acid chain: Putative pre-16S rRNA nuclease (138 aa).

It belongs to the YqgF nuclease family.

It localises to the cytoplasm. Functionally, could be a nuclease involved in processing of the 5'-end of pre-16S rRNA. The sequence is that of Putative pre-16S rRNA nuclease from Geobacillus thermodenitrificans (strain NG80-2).